We begin with the raw amino-acid sequence, 116 residues long: DNA-directed RNA polymerase subunit omega (116 aa).

Belongs to the RNA polymerase subunit omega family. As to quaternary structure, the RNAP catalytic core consists of 2 alpha, 1 beta, 1 beta' and 1 omega subunit. When a sigma factor is associated with the core the holoenzyme is formed, which can initiate transcription.

The enzyme catalyses RNA(n) + a ribonucleoside 5'-triphosphate = RNA(n+1) + diphosphate. Functionally, promotes RNA polymerase assembly. Latches the N- and C-terminal regions of the beta' subunit thereby facilitating its interaction with the beta and alpha subunits. This is DNA-directed RNA polymerase subunit omega from Hyphomonas neptunium (strain ATCC 15444).